We begin with the raw amino-acid sequence, 372 residues long: DNA replication and repair protein RecF (372 aa).

Residue 30–37 participates in ATP binding; it reads GDNGQGKT.

It belongs to the RecF family.

Its subcellular location is the cytoplasm. Its function is as follows. The RecF protein is involved in DNA metabolism; it is required for DNA replication and normal SOS inducibility. RecF binds preferentially to single-stranded, linear DNA. It also seems to bind ATP. This is DNA replication and repair protein RecF from Ruminiclostridium cellulolyticum (strain ATCC 35319 / DSM 5812 / JCM 6584 / H10) (Clostridium cellulolyticum).